Here is a 242-residue protein sequence, read N- to C-terminus: MAFAVIRACSRVGRGGLYKRLGGLPRGTRRQRQRRQGASLSTTEQRSLAPRPPTGPPARYPSPAVPARASEARRHPAADLDPPPGEPQAVASRGTPEPRPPPESPGAQPPPGPAAADGAMAAAKPGELMGISSSYQAVMPHFVCLADEFPQPVRPAKLPKGKGRLRRPRQSRFKTQPVTFDEIQEVEEEGVSPMEEEKAKKSFLQSLECLRRSTQSLSLQREPLGSCKLRNSLDSSDSDSAL.

Disordered regions lie at residues 16–121 (GLYK…GAMA) and 152–178 (PVRP…TQPV). 2 stretches are compositionally biased toward pro residues: residues 50–64 (PRPP…PSPA) and 97–113 (EPRP…PPGP). A compositionally biased stretch (basic residues) spans 157–172 (KLPKGKGRLRRPRQSR). T175 bears the Phosphothreonine mark. A phosphoserine mark is found at S192, S206, S216, S232, and S238. Residues 215–242 (QSLSLQREPLGSCKLRNSLDSSDSDSAL) form a disordered region. Over residues 232–242 (SLDSSDSDSAL) the composition is skewed to low complexity.

The protein localises to the cytoplasm. This is an uncharacterized protein from Rattus norvegicus (Rat).